The primary structure comprises 802 residues: Vacuolar membrane protease (802 aa).

Residues 1–13 are Cytoplasmic-facing; that stretch reads MARYNPLAFTSGP. A helical membrane pass occupies residues 14 to 34; the sequence is VVFFITITYTALLIALLLTHL. At 35 to 357 the chain is on the vacuolar side; it reads TLPSYPSHPP…KVFIVFQLHT (323 aa). Asn48, Asn102, Asn105, and Asn112 each carry an N-linked (GlcNAc...) asparagine glycan. Positions 152 and 164 each coordinate Zn(2+). Glu198 (proton acceptor) is an active-site residue. Residues Glu199, Glu224, and His297 each coordinate Zn(2+). The chain crosses the membrane as a helical span at residues 358 to 378; it reads FFALCVTLLVVAPLTLIGLAW. The Cytoplasmic segment spans residues 379–389; it reads SLHKADRNYLF. A helical membrane pass occupies residues 390-409; it reads ARKAFVYSADDDEPIHLYGW. Residues 410-423 lie on the Vacuolar side of the membrane; that stretch reads RGFFRFPIAFGIAT. A helical transmembrane segment spans residues 424–444; sequence SIVVGLAMMLSAWFAVSWFLL. Residues 445 to 457 are Cytoplasmic-facing; sequence HGADAMRPSALQR. Residues 458–478 form a helical membrane-spanning segment; sequence MYSLLWLFIGSFCLLVFFTIL. At 479 to 490 the chain is on the vacuolar side; it reads ANNHQVAAGYPS. The chain crosses the membrane as a helical span at residues 491–511; sequence LFCFATVFLANVLSFLELFLA. Residues 512-609 are Cytoplasmic-facing; it reads PPKSAYAWNV…EQEWSGKLPS (98 aa). 2 disordered regions span residues 528-554 and 570-603; these read GSRP…ATET and AGRR…EQEW. A helical membrane pass occupies residues 610–630; that stretch reads WIWIVQFSLLAPMIVILVGQI. The Vacuolar segment spans residues 631-649; the sequence is ALLLTSALYQTPSDGNSPL. A helical membrane pass occupies residues 650–670; the sequence is YIYTSIAALAVFLVAPIGPFI. The Cytoplasmic segment spans residues 671–677; the sequence is HRFTHHV. Residues 678–698 form a helical membrane-spanning segment; it reads PTFLFLLCVATTIYNLVAFPF. At 699-802 the chain is on the vacuolar side; it reads SEQHKLKVYF…HDDSNNRGRR (104 aa). N-linked (GlcNAc...) asparagine glycosylation is found at Asn746 and Asn779.

This sequence belongs to the peptidase M28 family. Requires Zn(2+) as cofactor.

The protein localises to the vacuole membrane. In terms of biological role, may be involved in vacuolar sorting and osmoregulation. The polypeptide is Vacuolar membrane protease (Leptosphaeria maculans (strain JN3 / isolate v23.1.3 / race Av1-4-5-6-7-8) (Blackleg fungus)).